The sequence spans 622 residues: Signal recognition particle subunit SRP68 (622 aa).

The interval 576–622 (RDATPKKAAKGSSAAAASSKTSNQEEEEQQGLTGMLSGWKKSFWGNK) is disordered. Residues 585–595 (KGSSAAAASSK) show a composition bias toward low complexity.

The protein belongs to the SRP68 family. As to quaternary structure, heterodimer with srpa-72. Srpa-68/srpa-72 heterodimer formation is stabilized by the presence of 7SL RNA. Component of a signal recognition particle (SRP) complex that consists of a 7SL RNA molecule of 300 nucleotides and six protein subunits: srpa-72, srpa-68, SRP54, F37F2.2/SRP19, F25G6.8/SRP14 and ZK512.4/SRP9. Within the SRP complex, interacts (via C-terminus) with srpa-72 (via N-terminus).

The protein localises to the cytoplasm. It is found in the nucleus. It localises to the nucleolus. Its subcellular location is the endoplasmic reticulum. In terms of biological role, component of the signal recognition particle (SRP) complex, a ribonucleoprotein complex that mediates the cotranslational targeting of secretory and membrane proteins to the endoplasmic reticulum (ER). The SRP complex interacts with the signal sequence in nascent secretory and membrane proteins and directs them to the membrane of the ER. The SRP complex targets the ribosome-nascent chain complex to the SRP receptor (SR), which is anchored in the ER, where SR compaction and GTPase rearrangement drive cotranslational protein translocation into the ER. Binds the signal recognition particle RNA (7SL RNA), srpa-72 binds to this complex subsequently. The SRP complex possibly participates in the elongation arrest function. This is Signal recognition particle subunit SRP68 from Caenorhabditis elegans.